The sequence spans 303 residues: MTAITQDAAERDQAQAESKAATLIESLSWLQRFHDRIVVVKFGGNAMVDEELTRTFAEDVVYLRYAGLRPVVVHGGGPQISAMLTRLGIESEFRGGYRVTTPEVLEVVRMVLTGQVSRDVVRGINAHGPLAAAVSGEDAGLFTGRRRGAVVDGVEVDLGLVGDVVAVDPTAVLAQLDAGRIPVVSSIAPDESDPAVSLNVNADAAAAALAVALGAEKLVILTDVAGLYRDWPDRGSLVSDIRSDELRALLPSLESGMIPKMAACLEAVDGGVPKAAIIDGRIPHSMLLEIFTTNGIGTEVVPA.

Residues 76–77, R98, and N199 each bind substrate; that span reads GG.

This sequence belongs to the acetylglutamate kinase family. ArgB subfamily.

It is found in the cytoplasm. It catalyses the reaction N-acetyl-L-glutamate + ATP = N-acetyl-L-glutamyl 5-phosphate + ADP. It participates in amino-acid biosynthesis; L-arginine biosynthesis; N(2)-acetyl-L-ornithine from L-glutamate: step 2/4. Its function is as follows. Catalyzes the ATP-dependent phosphorylation of N-acetyl-L-glutamate. This is Acetylglutamate kinase from Clavibacter michiganensis subsp. michiganensis (strain NCPPB 382).